Here is a 392-residue protein sequence, read N- to C-terminus: Heat-inducible transcription repressor HrcA (392 aa).

It belongs to the HrcA family.

Functionally, negative regulator of class I heat shock genes (grpE-dnaK-dnaJ and groELS operons). Prevents heat-shock induction of these operons. The polypeptide is Heat-inducible transcription repressor HrcA (Chlamydia trachomatis serovar L2 (strain ATCC VR-902B / DSM 19102 / 434/Bu)).